Consider the following 1738-residue polypeptide: Sodium leak channel NALCN (1738 aa).

Over 1 to 36 the chain is Cytoplasmic; sequence MLKRKQSSRVEAQPVTDFGPDESLSDNADILWINKP. A helical membrane pass occupies residues 37–57; that stretch reads WVHSLLRICAIISVISVCMNT. Over 58-65 the chain is Extracellular; the sequence is PMTFEHYP. The chain crosses the membrane as a helical span at residues 66-90; sequence PLQYVTFTLDTLLMFLYTAEMIAKM. At 91 to 106 the chain is on the cytoplasmic side; that stretch reads HIRGIVKGDSSYVKDR. The chain crosses the membrane as a helical span at residues 107–129; it reads WCVFDGFMVFCLWVSLVLQVFEI. Over 130-137 the chain is Extracellular; sequence ADIVDQMS. A helical; Voltage-sensor membrane pass occupies residues 138–158; the sequence is PWGMLRIPRPLIMIRAFRIYF. The Cytoplasmic segment spans residues 159–173; it reads RFELPRTRITNILKR. The chain crosses the membrane as a helical span at residues 174–199; the sequence is SGEQIWSVSIFLLFFLLLYGILGVQM. Residues 200 to 269 are Extracellular-facing; sequence FGTFTYHCVV…YSGFNEIGTS (70 aa). 2 disulfides stabilise this stretch: C207–C239 and C229–C245. Residues N210 and N216 are each glycosylated (N-linked (GlcNAc...) asparagine). Positions 270-289 form an intramembrane region, pore-forming; the sequence is IFTVYEAASQEGWVFLMYRA. The Extracellular segment spans residues 290-294; it reads IDSFP. The chain crosses the membrane as a helical span at residues 295-322; sequence RWRSYFYFITLIFFLAWLVKNVFIAVII. At 323–382 the chain is on the cytoplasmic side; the sequence is ETFAEIRVQFQQMWGSRSSTTSTATTQMFHEDAAGGWQLVAVDVNKPQGRAPACLQKMMR. A helical membrane pass occupies residues 383 to 403; it reads SSVFHMFILSMVTVDVIVAAS. Over 404 to 416 the chain is Extracellular; the sequence is NYYKGENFRRQYD. A helical transmembrane segment spans residues 417–439; it reads EFYLAEVAFTVLFDLEALLKIWC. Topologically, residues 440-447 are cytoplasmic; the sequence is LGFTGYIS. The chain crosses the membrane as a helical span at residues 448 to 468; the sequence is SSLHKFELLLVIGTTLHVYPD. Residues 469 to 472 are Extracellular-facing; that stretch reads LYHS. The helical; Voltage-sensor transmembrane segment at 473–492 threads the bilayer; that stretch reads QFTYFQVLRVVRLIKISPAL. Residues 493-502 are Cytoplasmic-facing; it reads EDFVYKIFGP. Residues 503–530 traverse the membrane as a helical segment; sequence GKKLGSLVVFTASLLIVMSAISLQMFCF. Residues 531 to 543 lie on the Extracellular side of the membrane; that stretch reads VEELDRFTTFPRA. Positions 544 to 563 form an intramembrane region, pore-forming; it reads FMSMFQILTQEGWVDVMDQT. Topologically, residues 564–569 are extracellular; it reads LNAVGH. The helical transmembrane segment at 570–599 threads the bilayer; the sequence is MWAPVVAIYFILYHLFATLILLSLFVAVIL. Topologically, residues 600-886 are cytoplasmic; it reads DNLELDEDLK…QLYDLLGLVT (287 aa). The segment at 762–785 is disordered; it reads QERRSLRHGSNSQRISRGKSLETL. The stretch at 795 to 830 forms a coiled coil; that stretch reads YRNAQREDSEIKMIQEKKEQAEMKRKVQEEELRENH. The helical transmembrane segment at 887–906 threads the bilayer; that stretch reads YLDWVMIIVTICSCISMMFE. Residues 907 to 915 are Extracellular-facing; it reads SPFRRVMHA. Residues 916–939 traverse the membrane as a helical segment; sequence PTLQIAEYVFVIFMSIELNLKIMA. Residues 940 to 947 lie on the Cytoplasmic side of the membrane; it reads DGLFFTPT. The helical transmembrane segment at 948–972 threads the bilayer; it reads AVIRDFGGVMDIFIYLVSLIFLCWM. Over 973–980 the chain is Extracellular; the sequence is PQNVPAES. The helical; Voltage-sensor transmembrane segment at 981 to 1003 threads the bilayer; the sequence is GAQLLMVLRCLRPLRIFKLVPQM. Residues 1004–1015 are Cytoplasmic-facing; that stretch reads RKVVRELFSGFK. Residues 1016 to 1039 form a helical membrane-spanning segment; it reads EIFLVSILLLTLMLVFASFGVQLF. Topologically, residues 1040-1104 are extracellular; that stretch reads AGKLAKCNDP…NFNFDNVGNA (65 aa). C1046 and C1057 are oxidised to a cystine. N1064 carries N-linked (GlcNAc...) asparagine glycosylation. An intramembrane region (pore-forming) is located at residues 1105–1124; sequence MLALFEVLSLKGWVEVRDVI. The Extracellular segment spans residues 1125–1129; sequence IHRVG. The helical transmembrane segment at 1130–1159 threads the bilayer; it reads PIHGIYIHVFVFLGCMIGLTLFVGVVIANF. Residues 1160–1210 are Cytoplasmic-facing; the sequence is NENKGTALLTVDQRRWEDLKSRLKIAQPLHLPPRPDNDGFRAKMYDITQHP. The chain crosses the membrane as a helical span at residues 1211-1227; it reads FFKRTIALLVLAQSVLL. Over 1228–1236 the chain is Extracellular; that stretch reads SVKWDVEDP. Residues 1237-1260 traverse the membrane as a helical segment; sequence VTVPLATMSVVFTFIFVLEVTMKI. Residues 1261–1271 are Cytoplasmic-facing; that stretch reads IAMSPAGFWQS. The helical transmembrane segment at 1272 to 1293 threads the bilayer; that stretch reads RRNRYDLLVTSLGVVWVVLHFA. The Extracellular segment spans residues 1294–1296; the sequence is LLN. The helical; Voltage-sensor transmembrane segment at 1297 to 1318 threads the bilayer; the sequence is AYTYMMGACVIVFRFFSICGKH. Residues 1319–1331 lie on the Cytoplasmic side of the membrane; sequence VTLKMLLLTVVVS. The chain crosses the membrane as a helical span at residues 1332–1357; sequence MYKSFFIIVGMFLLLLCYAFAGVVLF. Residues 1358 to 1378 are Extracellular-facing; that stretch reads GTVKYGENINRHANFSSAGKA. The segment at residues 1379–1398 is an intramembrane region (pore-forming); sequence ITVLFRIVTGEDWNKIMHDC. Over 1399 to 1420 the chain is Extracellular; that stretch reads MVQPPFCTPDEFTYWATDCGNY. A disulfide bridge links C1405 with C1417. A helical membrane pass occupies residues 1421–1447; the sequence is AGALMYFCSFYVIIAYIMLNLLVAIIV. Topologically, residues 1448 to 1738 are cytoplasmic; it reads ENFSLFYSTE…DESGDDLLDI (291 aa). The tract at residues 1611–1678 is disordered; that stretch reads PPSIETTQPS…QWRLPSAPKP (68 aa). Polar residues predominate over residues 1613–1632; sequence SIETTQPSEDTNANSQDNSM. The span at 1633 to 1648 shows a compositional bias: low complexity; sequence QPETSSQQQLLSPTLS.

Belongs to the NALCN family. As to quaternary structure, found in a complex with NALCN, UNC79, UNC80 and NACL1; these auxiliary subunits are indispensable for the function of NALCN channel. Interacts with UNC80; required for the NALCN activation/inhibition by GPCRs in neurons. Found in a complex with NALCN, UNC79 and UNC80; UNC80 bridges NALCN to UNC79. Interacts with CHRM3. In terms of processing, phosphorylated on tyrosine residues.

The protein localises to the cell membrane. It carries out the reaction Na(+)(in) = Na(+)(out). Its activity is regulated as follows. Inhibited by low micromolar concentrations of Gd(3+) and high micromolar concentrations of verapamil. Insensitive to tetrodotoxin (TTX) and potentiated by low external Ca(2+) concentration. Its function is as follows. Voltage-gated ion channel responsible for the resting Na(+) permeability that controls neuronal excitability. NALCN channel functions as a multi-protein complex, which consists at least of NALCN, NALF1, UNC79 and UNC80. NALCN is the voltage-sensing, pore-forming subunit of the NALCN channel complex. NALCN channel complex is constitutively active and conducts monovalent cations but is blocked by physiological concentrations of extracellular divalent cations. In addition to its role in regulating neuronal excitability, is required for normal respiratory rhythm, systemic osmoregulation by controlling the serum sodium concentration and in the regulation of the intestinal pace-making activity in the interstitial cells of Cajal. NALCN channel is also activated by neuropeptides such as neurotensin and substance P (SP) through a SRC family kinases-dependent pathway. In addition, NALCN activity is enhanced/modulated by several GPCRs, such as CHRM3. The sequence is that of Sodium leak channel NALCN from Homo sapiens (Human).